The following is a 51-amino-acid chain: MTIKNKTINLIENKKPVVYPIFTFRWLAVHALAVPTVFFIGSITSMQFIQR.

Residues 26–42 form a helical membrane-spanning segment; the sequence is WLAVHALAVPTVFFIGS. H30 contacts heme.

It belongs to the PsbE/PsbF family. As to quaternary structure, heterodimer of an alpha subunit and a beta subunit. PSII is composed of 1 copy each of membrane proteins PsbA, PsbB, PsbC, PsbD, PsbE, PsbF, PsbH, PsbI, PsbJ, PsbK, PsbL, PsbM, PsbT, PsbY, PsbZ, Psb30/Ycf12, at least 3 peripheral proteins of the oxygen-evolving complex and a large number of cofactors. It forms dimeric complexes. Heme b serves as cofactor.

It is found in the plastid. The protein resides in the chloroplast thylakoid membrane. Functionally, this b-type cytochrome is tightly associated with the reaction center of photosystem II (PSII). PSII is a light-driven water:plastoquinone oxidoreductase that uses light energy to abstract electrons from H(2)O, generating O(2) and a proton gradient subsequently used for ATP formation. It consists of a core antenna complex that captures photons, and an electron transfer chain that converts photonic excitation into a charge separation. The sequence is that of Cytochrome b559 subunit beta from Bigelowiella natans (Pedinomonas minutissima).